Here is a 182-residue protein sequence, read N- to C-terminus: MSRIGKRPITVPAKVQVTIDGTKVVVKGPKGELSRELPVNVSVSQEGETLQVTRRDETRTSRQLHGLSRTLVANMVEGVSQGFQRRLEIQGVGYRAQVQGRNLILNMGYSHQVQIEPPDGIQFAVENNTNVIVSGYDKEIVGNTAAKIRAVRPPEPYKGKGIRYAGEVVRRKAGKTGKGGKK.

It belongs to the universal ribosomal protein uL6 family. Part of the 50S ribosomal subunit.

This protein binds to the 23S rRNA, and is important in its secondary structure. It is located near the subunit interface in the base of the L7/L12 stalk, and near the tRNA binding site of the peptidyltransferase center. The chain is Large ribosomal subunit protein uL6 from Trichormus variabilis (strain ATCC 29413 / PCC 7937) (Anabaena variabilis).